The following is a 440-amino-acid chain: Transposon Ty1-GR2 Gag polyprotein (440 aa).

Residues 1–16 are compositionally biased toward low complexity; the sequence is MESQQLSQHSHISHGS. Disordered stretches follow at residues 1-93, 126-173, and 352-440; these read MESQ…MMTQ, PQSQ…RPPP, and GSRN…PGTY. 2 stretches are compositionally biased toward polar residues: residues 48–60 and 127–152; these read TKAN…TPAS and QSQF…GNTF. The segment covering 153–165 has biased composition (low complexity); sequence TDSSSADSDMTST. The segment at 299–401 is RNA-binding; sequence NNGIHINNKV…NSKSKTARAH (103 aa). Over residues 402–418 the composition is skewed to low complexity; it reads NVSTSNNSPSTDNDSIS. At Ser416 the chain carries Phosphoserine. A compositionally biased stretch (polar residues) spans 419-428; it reads KSTTEPIQLN. Over residues 429–440 the composition is skewed to basic and acidic residues; that stretch reads NKHDLHLRPGTY.

Homotrimer.

Its subcellular location is the cytoplasm. Capsid protein (CA) is the structural component of the virus-like particle (VLP), forming the shell that encapsulates the retrotransposons dimeric RNA genome. The particles are assembled from trimer-clustered units and there are holes in the capsid shells that allow for the diffusion of macromolecules. CA also has nucleocapsid-like chaperone activity, promoting primer tRNA(i)-Met annealing to the multipartite primer-binding site (PBS), dimerization of Ty1 RNA and initiation of reverse transcription. The sequence is that of Transposon Ty1-GR2 Gag polyprotein (TY1A-GR2) from Saccharomyces cerevisiae (strain ATCC 204508 / S288c) (Baker's yeast).